The primary structure comprises 861 residues: DNA mismatch repair protein MutS (861 aa).

618–625 (GPNMGGKS) is an ATP binding site.

The protein belongs to the DNA mismatch repair MutS family.

This protein is involved in the repair of mismatches in DNA. It is possible that it carries out the mismatch recognition step. This protein has a weak ATPase activity. This Shewanella sp. (strain MR-4) protein is DNA mismatch repair protein MutS.